A 78-amino-acid chain; its full sequence is Large ribosomal subunit protein bL28 (78 aa).

The disordered stretch occupies residues Met-1–Thr-25.

Belongs to the bacterial ribosomal protein bL28 family.

This Vibrio vulnificus (strain CMCP6) protein is Large ribosomal subunit protein bL28.